Here is a 139-residue protein sequence, read N- to C-terminus: Large ribosomal subunit protein bL20 (139 aa).

The protein belongs to the bacterial ribosomal protein bL20 family.

Functionally, binds directly to 23S ribosomal RNA and is necessary for the in vitro assembly process of the 50S ribosomal subunit. It is not involved in the protein synthesizing functions of that subunit. The chain is Large ribosomal subunit protein bL20 from Leuconostoc mesenteroides subsp. mesenteroides (strain ATCC 8293 / DSM 20343 / BCRC 11652 / CCM 1803 / JCM 6124 / NCDO 523 / NBRC 100496 / NCIMB 8023 / NCTC 12954 / NRRL B-1118 / 37Y).